The chain runs to 165 residues: Endoribonuclease YbeY (165 aa).

Zn(2+) contacts are provided by histidine 130, histidine 134, and histidine 140.

Belongs to the endoribonuclease YbeY family. The cofactor is Zn(2+).

Its subcellular location is the cytoplasm. In terms of biological role, single strand-specific metallo-endoribonuclease involved in late-stage 70S ribosome quality control and in maturation of the 3' terminus of the 16S rRNA. This is Endoribonuclease YbeY from Streptococcus pyogenes serotype M28 (strain MGAS6180).